The sequence spans 423 residues: Kynureninase (423 aa).

Pyridoxal 5'-phosphate-binding positions include leucine 105, serine 106, 133-136 (FPSD), aspartate 218, histidine 221, and tyrosine 243. Lysine 244 is modified (N6-(pyridoxal phosphate)lysine). Tryptophan 273 and asparagine 301 together coordinate pyridoxal 5'-phosphate.

It belongs to the kynureninase family. As to quaternary structure, homodimer. Pyridoxal 5'-phosphate is required as a cofactor.

It carries out the reaction L-kynurenine + H2O = anthranilate + L-alanine + H(+). It catalyses the reaction 3-hydroxy-L-kynurenine + H2O = 3-hydroxyanthranilate + L-alanine + H(+). The protein operates within amino-acid degradation; L-kynurenine degradation; L-alanine and anthranilate from L-kynurenine: step 1/1. It functions in the pathway cofactor biosynthesis; NAD(+) biosynthesis; quinolinate from L-kynurenine: step 2/3. Its function is as follows. Catalyzes the cleavage of L-kynurenine (L-Kyn) and L-3-hydroxykynurenine (L-3OHKyn) into anthranilic acid (AA) and 3-hydroxyanthranilic acid (3-OHAA), respectively. The chain is Kynureninase from Xanthomonas oryzae pv. oryzae (strain MAFF 311018).